Here is a 236-residue protein sequence, read N- to C-terminus: Zinc finger AN1 domain-containing stress-associated protein 13 (236 aa).

Disordered stretches follow at residues 48–81 (KEGR…PGKR) and 150–173 (TVPE…AKTK). A compositionally biased stretch (polar residues) spans 66 to 75 (RLQLPTTSIV). The AN1-type; degenerate zinc-finger motif lies at 170–216 (AKTKSRCAACGRRVGLMGFECRCGAVFCGAHPLLGQARLWLRLQGRA). Residues Cys-176, Cys-179, Cys-197, and His-200 each coordinate Zn(2+).

Functionally, may be involved in environmental stress response. In Oryza sativa subsp. japonica (Rice), this protein is Zinc finger AN1 domain-containing stress-associated protein 13 (SAP13).